The primary structure comprises 303 residues: uncharacterized protein (303 aa).

This is an uncharacterized protein from Bacillus subtilis (strain 168).